We begin with the raw amino-acid sequence, 340 residues long: Delta-aminolevulinic acid dehydratase (340 aa).

The Zn(2+) site is built by Cys133, Cys135, and Cys143. Residue Lys210 is the Schiff-base intermediate with substrate of the active site. 5-aminolevulinate-binding residues include Arg220 and Arg232. Residue Lys263 is the Schiff-base intermediate with substrate of the active site. The 5-aminolevulinate site is built by Ser290 and Tyr329.

The protein belongs to the ALAD family. As to quaternary structure, homooctamer. Zn(2+) is required as a cofactor.

The catalysed reaction is 2 5-aminolevulinate = porphobilinogen + 2 H2O + H(+). It functions in the pathway porphyrin-containing compound metabolism; protoporphyrin-IX biosynthesis; coproporphyrinogen-III from 5-aminolevulinate: step 1/4. Its function is as follows. Catalyzes an early step in the biosynthesis of tetrapyrroles. Binds two molecules of 5-aminolevulinate per subunit, each at a distinct site, and catalyzes their condensation to form porphobilinogen. This chain is Delta-aminolevulinic acid dehydratase (HEM2), found in Candida glabrata (strain ATCC 2001 / BCRC 20586 / JCM 3761 / NBRC 0622 / NRRL Y-65 / CBS 138) (Yeast).